We begin with the raw amino-acid sequence, 726 residues long: Catalase-peroxidase (726 aa).

The disordered stretch occupies residues 1-33 (MSTTDDTHNTLSTGKCPFHQGGHDRSAGAGTAS). The segment at residues 105-226 (WHGAGTYRSI…LGATEMGLIY (122 aa)) is a cross-link (tryptophyl-tyrosyl-methioninium (Trp-Tyr) (with M-252)). The active-site Proton acceptor is histidine 106. Positions 226–252 (YVNPEGPDHSGEPLSAAAAIRATFGNM) form a cross-link, tryptophyl-tyrosyl-methioninium (Tyr-Met) (with W-105). A heme b-binding site is contributed by histidine 267.

Belongs to the peroxidase family. Peroxidase/catalase subfamily. As to quaternary structure, homodimer or homotetramer. Heme b serves as cofactor. Post-translationally, formation of the three residue Trp-Tyr-Met cross-link is important for the catalase, but not the peroxidase activity of the enzyme.

It catalyses the reaction H2O2 + AH2 = A + 2 H2O. The catalysed reaction is 2 H2O2 = O2 + 2 H2O. Its function is as follows. Bifunctional enzyme with both catalase and broad-spectrum peroxidase activity. This Salmonella choleraesuis (strain SC-B67) protein is Catalase-peroxidase.